We begin with the raw amino-acid sequence, 248 residues long: Granulin (248 aa).

The protein belongs to the polyhedrin family.

Component of the virus occlusion bodies, which are large proteinaceous structures, that protect the virus from the outside environment for extended periods until they are ingested by insect larvae. The chain is Granulin from Cydia pomonella (Codling moth).